A 321-amino-acid polypeptide reads, in one-letter code: Citrate synthase (321 aa).

Residues His248 and Asp306 contribute to the active site.

The protein belongs to the citrate synthase family.

It catalyses the reaction oxaloacetate + acetyl-CoA + H2O = citrate + CoA + H(+). It participates in carbohydrate metabolism; tricarboxylic acid cycle; isocitrate from oxaloacetate: step 1/2. The polypeptide is Citrate synthase (gltA) (Bartonella bacilliformis).